We begin with the raw amino-acid sequence, 1055 residues long: cAMP and cAMP-inhibited cGMP 3',5'-cyclic phosphodiesterase 10A (1055 aa).

3 disordered regions span residues 1–90 (MASL…RGGG), 151–193 (AAAA…GRRR), and 205–250 (LPAR…RPQG). Composition is skewed to gly residues over residues 79–90 (GGPGALSARGGG) and 154–168 (AGGG…GGGQ). Residues 220 to 231 (PLGQAARRAGSP) are compositionally biased toward low complexity. Positions 232–243 (GFPGAGPGGGGQ) are enriched in gly residues. Thr282 carries the phosphothreonine modification. 2 GAF domains span residues 367–510 (DNQL…SVAI) and 542–688 (AIDS…ALAL). 3',5'-cyclic AMP is bound by residues 562 to 563 (RC), 606 to 607 (IA), Thr640, Gln659, and His791. A PDEase domain is found at 718–1035 (TSEEWQGLMQ…SQWEKVIRGE (318 aa)). The active-site Proton donor is His791. A 3',5'-cyclic GMP-binding site is contributed by His791. Residues His795, His829, Asp830, and Asp940 each coordinate a divalent metal cation. Gln992 is a binding site for 3',5'-cyclic AMP. A 3',5'-cyclic GMP-binding site is contributed by Gln992.

It belongs to the cyclic nucleotide phosphodiesterase family. In terms of assembly, homodimer. A divalent metal cation serves as cofactor. In terms of processing, phosphorylated on Thr-16. In terms of tissue distribution, abundant in the putamen and caudate nucleus regions of brain and testis, moderately expressed in the thyroid gland, pituitary gland, thalamus and cerebellum.

The protein resides in the cytoplasm. The protein localises to the cytosol. The catalysed reaction is a nucleoside 3',5'-cyclic phosphate + H2O = a nucleoside 5'-phosphate + H(+). The enzyme catalyses 3',5'-cyclic AMP + H2O = AMP + H(+). It carries out the reaction 3',5'-cyclic GMP + H2O = GMP + H(+). Its pathway is purine metabolism; 3',5'-cyclic AMP degradation; AMP from 3',5'-cyclic AMP: step 1/1. It functions in the pathway purine metabolism; 3',5'-cyclic GMP degradation; GMP from 3',5'-cyclic GMP: step 1/1. Its activity is regulated as follows. Inhibited by dipyridamole and moderately by IBMX. cGMP acts as an allosteric activator. Plays a role in signal transduction by regulating the intracellular concentration of cyclic nucleotides. Can hydrolyze both cAMP and cGMP, but has higher affinity for cAMP and is more efficient with cAMP as substrate. May play a critical role in regulating cAMP and cGMP levels in the striatum, a region of the brain that contributes to the control of movement and cognition. In Homo sapiens (Human), this protein is cAMP and cAMP-inhibited cGMP 3',5'-cyclic phosphodiesterase 10A (PDE10A).